Consider the following 34-residue polypeptide: Non-toxic venom protein (34 aa).

Positions 1–34 (KEGYPTNSEGCKITXLFNDPYCKGXCINLSTQAD) constitute an LCN-type CS-alpha/beta domain.

Expressed by the venom gland.

The protein localises to the secreted. Does not cause symptoms of intoxication, paralysis or death in insects (A.domestica). The polypeptide is Non-toxic venom protein (Rhopalurus junceus (Caribbean blue scorpion)).